The following is a 397-amino-acid chain: Riboflavin biosynthesis protein RibBA (397 aa).

The tract at residues 1-199 (MFHRIEEALE…IEDLIAYRRH (199 aa)) is DHBP synthase. Residues 26–27 (RE), Asp31, 138–142 (RAGHT), and Glu162 each bind D-ribulose 5-phosphate. Glu27 is a Mg(2+) binding site. Mg(2+) is bound at residue His141. The GTP cyclohydrolase II stretch occupies residues 200 to 397 (HETLVTREVE…VNKLGHLLNL (198 aa)). 250–254 (RVHSE) provides a ligand contact to GTP. The Zn(2+) site is built by Cys255, Cys266, and Cys268. Residues Gln271, 293–295 (EGR), and Thr315 contribute to the GTP site. Asp327 acts as the Proton acceptor; for GTP cyclohydrolase activity in catalysis. Arg329 (nucleophile; for GTP cyclohydrolase activity) is an active-site residue. The GTP site is built by Thr350 and Lys355.

This sequence in the N-terminal section; belongs to the DHBP synthase family. The protein in the C-terminal section; belongs to the GTP cyclohydrolase II family. The cofactor is Mg(2+). Mn(2+) serves as cofactor. It depends on Zn(2+) as a cofactor.

The enzyme catalyses D-ribulose 5-phosphate = (2S)-2-hydroxy-3-oxobutyl phosphate + formate + H(+). It catalyses the reaction GTP + 4 H2O = 2,5-diamino-6-hydroxy-4-(5-phosphoribosylamino)-pyrimidine + formate + 2 phosphate + 3 H(+). Its pathway is cofactor biosynthesis; riboflavin biosynthesis; 2-hydroxy-3-oxobutyl phosphate from D-ribulose 5-phosphate: step 1/1. The protein operates within cofactor biosynthesis; riboflavin biosynthesis; 5-amino-6-(D-ribitylamino)uracil from GTP: step 1/4. Functionally, catalyzes the conversion of D-ribulose 5-phosphate to formate and 3,4-dihydroxy-2-butanone 4-phosphate. In terms of biological role, catalyzes the conversion of GTP to 2,5-diamino-6-ribosylamino-4(3H)-pyrimidinone 5'-phosphate (DARP), formate and pyrophosphate. This Bacillus cereus (strain G9842) protein is Riboflavin biosynthesis protein RibBA.